A 264-amino-acid chain; its full sequence is Glutamate racemase (264 aa).

Substrate is bound by residues D10–S11 and Y42–G43. Catalysis depends on C73, which acts as the Proton donor/acceptor. A substrate-binding site is contributed by N74–T75. The active-site Proton donor/acceptor is C183. T184 to H185 is a binding site for substrate.

This sequence belongs to the aspartate/glutamate racemases family.

The catalysed reaction is L-glutamate = D-glutamate. It functions in the pathway cell wall biogenesis; peptidoglycan biosynthesis. Provides the (R)-glutamate required for cell wall biosynthesis. This Streptococcus gordonii (strain Challis / ATCC 35105 / BCRC 15272 / CH1 / DL1 / V288) protein is Glutamate racemase.